Consider the following 513-residue polypeptide: MTAQMHEAGRTKEAGNRLQAWRTGIDTYQEPVVYMRRDCPVCRSEGFTTQARVQLTAGGRSIVATLSVVDGDWLAENVAGLSESAWASLGAQPGEPVAVTHAPPLDSLSHVRAKVYGNSLGDAQFGAIISDVAAGRYSDLHLATFITACAGDRLDLAETLSLTKAMIAVGDRIDWGRPLVVDKHCVGGLPGNRTTLLVVPIVTACGLMMPKTSSRAITSPAGTADTMEVLAPVNLDVPSMRRVVERTGGCIVWGGSVRLSPADDILIRVERPLDLDSEGQLVASVLSKKAAAGSTHVLIDLPVGATAKVRSAHAAASLGRRLQEVGGAIGLQVFLRVTDGEQPVGRGIGPALEARDVLAVLQGTREAPADLRERALRLAADILEMGGAAPAGGGLKLATEVLADGRAWAKFQAICSEQGGLRSLPMAAHLHTVESPGTGRVTRIDNRLLARAAKLAGAPTAPAAGIDVHARLGDRVEAGQPLFTLHAQAPGELAYALEFVRARPPIFQISENV.

This sequence belongs to the thymidine/pyrimidine-nucleoside phosphorylase family. Type 2 subfamily.

It catalyses the reaction thymidine + phosphate = 2-deoxy-alpha-D-ribose 1-phosphate + thymine. The protein is Putative thymidine phosphorylase 2 of Acidovorax sp. (strain JS42).